Reading from the N-terminus, the 1319-residue chain is DNA (cytosine-5)-methyltransferase CMT2 (1319 aa).

The segment covering 1 to 15 (METPPPDPVSPPPPA) has biased composition (pro residues). 4 disordered regions span residues 1-34 (METP…GGFS), 142-189 (ALDS…VASS), 265-302 (SAAS…KLPA), and 442-468 (KSRV…RART). Over residues 266–279 (AASSMPLNQNGDSS) the composition is skewed to polar residues. Over residues 285–296 (RVADSRKSRSSE) the composition is skewed to basic and acidic residues. The 118-residue stretch at 602–719 (YTFCIGECAF…IDYSTFSTIE (118 aa)) folds into the BAH domain. The region spanning 758–1296 (LSLLDLYCGC…YALAMAYLKK (539 aa)) is the SAM-dependent MTase C5-type domain. Residues 863-928 (FEVWKLVDIC…EGHRQRILPR (66 aa)) form the Chromo domain. Residue Cys941 is part of the active site.

Its subcellular location is the nucleus. It catalyses the reaction a 2'-deoxycytidine in DNA + S-adenosyl-L-methionine = a 5-methyl-2'-deoxycytidine in DNA + S-adenosyl-L-homocysteine + H(+). Functionally, involved in CpXpG DNA methylation. This Oryza sativa subsp. japonica (Rice) protein is DNA (cytosine-5)-methyltransferase CMT2.